The chain runs to 820 residues: TORTIFOLIA1-like protein 2 (820 aa).

HEAT repeat units lie at residues 61–98 (DKVSCFLSCILDTDSEQKSAVRKECIRLMGTLARFHEG), 102–139 (PYLGKMVSSIVKRLKDPDSVVRDACIETMGVLASKMSC), 146–183 (GVFVSLVKPLFEAIGDQNKYVQSGAALCLARVIDSSPE), 187–224 (AIIQRMLMRTVKLLNNSHFIAKPAVIELNRSIILAGGA), and 228–265 (SVLSSAMSSFQDALKNKDWTTRKAASVALMEIAATGEK). Positions 304-321 (PGSDSPEPSETESSVKES) are enriched in low complexity. Disordered stretches follow at residues 304–325 (PGSDSPEPSETESSVKESYNGA), 357–377 (PVSARQPPTRYNDDPRKSNQD), and 584–644 (GSTI…GKTG). A compositionally biased stretch (basic and acidic residues) spans 367-377 (YNDDPRKSNQD). The span at 584–613 (GSTISPRLSSCTSRTSTDIRNRQSTLSTSK) shows a compositional bias: polar residues.

The chain is TORTIFOLIA1-like protein 2 from Arabidopsis thaliana (Mouse-ear cress).